A 30-amino-acid polypeptide reads, in one-letter code: Poly-His-poly-Gly peptide 2 (30 aa).

The segment covering 1–18 (EDDHDHHHHHHHHHHHHG) has biased composition (basic residues). Residues 1–30 (EDDHDHHHHHHHHHHHHGVGGGGGGGGGGA) are disordered. Residues 19–30 (VGGGGGGGGGGA) show a composition bias toward gly residues.

Expressed by the venom gland.

It localises to the secreted. In terms of biological role, may serve as a metalloproteinase inhibitor during glandular storage. Their inhibition may be instantly disengaged, by dilution or physiochemical change, when venom is injected into tissue of the victim. This chain is Poly-His-poly-Gly peptide 2, found in Atheris nitschei (Great lakes bush viper).